Here is a 203-residue protein sequence, read N- to C-terminus: GTP cyclohydrolase-2 (203 aa).

49–53 contributes to the GTP binding site; that stretch reads RIHSE. Cys54, Cys65, and Cys67 together coordinate Zn(2+). GTP is bound by residues Gln70, 92-94, and Thr114; that span reads EGR. Asp126 functions as the Proton acceptor in the catalytic mechanism. Arg128 (nucleophile) is an active-site residue. Residues Thr149 and Lys154 each coordinate GTP.

Belongs to the GTP cyclohydrolase II family. Zn(2+) serves as cofactor.

The enzyme catalyses GTP + 4 H2O = 2,5-diamino-6-hydroxy-4-(5-phosphoribosylamino)-pyrimidine + formate + 2 phosphate + 3 H(+). It functions in the pathway cofactor biosynthesis; riboflavin biosynthesis; 5-amino-6-(D-ribitylamino)uracil from GTP: step 1/4. Catalyzes the conversion of GTP to 2,5-diamino-6-ribosylamino-4(3H)-pyrimidinone 5'-phosphate (DARP), formate and pyrophosphate. In Shewanella oneidensis (strain ATCC 700550 / JCM 31522 / CIP 106686 / LMG 19005 / NCIMB 14063 / MR-1), this protein is GTP cyclohydrolase-2.